Consider the following 31-residue polypeptide: Circulin-B (31 aa).

A cross-link (cyclopeptide (Gly-Asn)) is located at residues 1 to 31 (GVIPCGESCVFIPCISTLLGCSCKNKVCYRN). Disulfide bonds link Cys-5–Cys-21, Cys-9–Cys-23, and Cys-14–Cys-28.

In terms of processing, this is a cyclic peptide.

Functionally, probably participates in a plant defense mechanism. Has antibiotic activity. Inhibits the cytopathic effects and replication of the human immunodeficiency virus. Active against both Gram-positive and Gram-negative bacteria. This chain is Circulin-B, found in Chassalia parviflora.